Here is a 965-residue protein sequence, read N- to C-terminus: Valine--tRNA ligase (965 aa).

The span at methionine 1 to glutamate 12 shows a compositional bias: polar residues. A disordered region spans residues methionine 1–glutamate 23. Residues proline 56–histidine 66 carry the 'HIGH' region motif. A 'KMSKS' region motif is present at residues lysine 568 to serine 572. Residue lysine 571 coordinates ATP. Residues methionine 893 to glutamate 960 are a coiled coil.

Belongs to the class-I aminoacyl-tRNA synthetase family. ValS type 1 subfamily. Monomer.

It is found in the cytoplasm. The catalysed reaction is tRNA(Val) + L-valine + ATP = L-valyl-tRNA(Val) + AMP + diphosphate. Its function is as follows. Catalyzes the attachment of valine to tRNA(Val). As ValRS can inadvertently accommodate and process structurally similar amino acids such as threonine, to avoid such errors, it has a 'posttransfer' editing activity that hydrolyzes mischarged Thr-tRNA(Val) in a tRNA-dependent manner. This is Valine--tRNA ligase from Photorhabdus laumondii subsp. laumondii (strain DSM 15139 / CIP 105565 / TT01) (Photorhabdus luminescens subsp. laumondii).